The following is a 145-amino-acid chain: Heat shock protein hsp-16.2 (145 aa).

The region spanning 32–137 (VCRISPSESS…QGRSIPIQQA (106 aa)) is the sHSP domain.

The protein belongs to the small heat shock protein (HSP20) family.

This chain is Heat shock protein hsp-16.2, found in Caenorhabditis elegans.